The sequence spans 396 residues: Deoxyguanosinetriphosphate triphosphohydrolase-like protein (396 aa).

In terms of domain architecture, HD spans 69–211; sequence RLSHSLEVSQ…AALADDIAYN (143 aa).

It belongs to the dGTPase family. Type 2 subfamily.

This chain is Deoxyguanosinetriphosphate triphosphohydrolase-like protein, found in Parvibaculum lavamentivorans (strain DS-1 / DSM 13023 / NCIMB 13966).